We begin with the raw amino-acid sequence, 516 residues long: Probable rhamnogalacturonase B (516 aa).

Positions 1 to 21 (MRLHAFTLLSLLGLVPSFAAA) are cleaved as a signal peptide. C42 and C68 are oxidised to a cystine. A glycan (N-linked (GlcNAc...) asparagine) is linked at N145. D219 serves as the catalytic Proton donor. Residues C221 and C238 are joined by a disulfide bond. N-linked (GlcNAc...) asparagine glycosylation is present at N239. The active site involves H294. N-linked (GlcNAc...) asparagine glycosylation is present at N321. 2 disulfide bridges follow: C344–C350 and C372–C381. The segment at 462-516 (ETPAAASRSEQVVQGASQETSQPAPESAGPVRSVPTGGNRPSRHRHGHHHFWIAA) is disordered. Over residues 469 to 485 (RSEQVVQGASQETSQPA) the composition is skewed to polar residues. Residues 502 to 516 (PSRHRHGHHHFWIAA) are compositionally biased toward basic residues.

Belongs to the glycosyl hydrolase 28 family.

It is found in the secreted. The enzyme catalyses Endohydrolysis of alpha-D-GalA-(1-&gt;2)-alpha-L-Rha glycosidic bond in the rhamnogalacturonan I backbone with initial inversion of anomeric configuration releasing oligosaccharides with beta-D-GalA at the reducing end.. Functionally, pectinolytic enzymes consist of four classes of enzymes: pectine lyase, polygalacturonase, pectin methylesterase and rhamnogalacturonase. Hydrolyzes alpha-D-galacturonopyranosyl-(1,2)-alpha-L-rhamnopyranosyl linkages in the backbone of the hairy regions of pectins. The chain is Probable rhamnogalacturonase B (rhgB) from Neosartorya fischeri (strain ATCC 1020 / DSM 3700 / CBS 544.65 / FGSC A1164 / JCM 1740 / NRRL 181 / WB 181) (Aspergillus fischerianus).